The sequence spans 361 residues: Probable mannose-1-phosphate guanylyltransferase 1 (361 aa).

The GDP-alpha-D-mannose site is built by L6 and V7. G9, G11, T12, R13, and K23 together coordinate diphosphate. G85, N109, D111, G146, and N173 together coordinate GDP-alpha-D-mannose.

The protein belongs to the transferase hexapeptide repeat family.

The enzyme catalyses alpha-D-mannose 1-phosphate + GTP + H(+) = GDP-alpha-D-mannose + diphosphate. Its pathway is nucleotide-sugar biosynthesis; GDP-alpha-D-mannose biosynthesis; GDP-alpha-D-mannose from alpha-D-mannose 1-phosphate (GTP route): step 1/1. In terms of biological role, catalyzes a reaction of the Smirnoff-Wheeler pathway, the major route to ascorbate biosynthesis in plants. The sequence is that of Probable mannose-1-phosphate guanylyltransferase 1 from Oryza sativa subsp. japonica (Rice).